We begin with the raw amino-acid sequence, 2055 residues long: Citron Rho-interacting kinase (2055 aa).

The residue at position 1 (Met-1) is an N-acetylmethionine. Residues 97–359 (FEVRSLVGCG…FEGLCCHPFF (263 aa)) enclose the Protein kinase domain. ATP is bound by residues 103 to 111 (VGCGHFAEV) and Lys-126. The active-site Proton acceptor is the Asp-221. The AGC-kinase C-terminal domain occupies 360–430 (ARTDWNNIRN…SKALGYLGRS (71 aa)). A phosphoserine mark is found at Ser-432, Ser-439, Ser-479, and Ser-581. Coiled coils occupy residues 441–1086 (AKVS…QWEA), 1091–1247 (LGDE…VLYS), and 1275–1325 (AKKK…RKAT). The interval 1132–1328 (LAVKEHKAEI…AAHRKATDHP (197 aa)) is interaction with Rho/Rac. Position 1237 is a phosphotyrosine (Tyr-1237). The segment covering 1316 to 1329 (REEAAHRKATDHPH) has biased composition (basic and acidic residues). 2 disordered regions span residues 1316-1336 (REEA…PATA) and 1348-1377 (SPEH…EFSR). Low complexity predominate over residues 1353–1363 (PSAMSLLAPPS). A compositionally biased stretch (basic and acidic residues) spans 1365–1377 (RRKESSTPEEFSR). Residues 1388–1437 (PHRFNVGLNMRATKCAVCLDTVHFGRQASKCLECQVMCHPKCSTCLPATC) form a Phorbol-ester/DAG-type zinc finger. The region spanning 1469–1589 (SLHLEGWMKV…WVTALESVVA (121 aa)) is the PH domain. The region spanning 1617-1907 (RLDMNCTLPF…RYLGPAISSG (291 aa)) is the CNH domain. Lys-1747 carries the post-translational modification N6-acetyllysine. The disordered stretch occupies residues 1932–2040 (SGTEQHRVPS…RGRLPAGAVR (109 aa)). The segment covering 1939–1948 (VPSTSRSSPN) has biased composition (polar residues). The residue at position 1966 (Ser-1966) is a Phosphoserine. Residues 1974–2031 (SHPREPSTPHRYRDREGRTELRRDKSPGRPLEREKSPGRMLSTRRERSPGRLFEDSSR) show a composition bias toward basic and acidic residues. Positions 1979–1984 (PSTPHR) match the SH3-binding motif. Phosphoserine is present on Ser-2021. The residue at position 2041 (Thr-2041) is a Phosphothreonine.

The protein belongs to the protein kinase superfamily. AGC Ser/Thr protein kinase family. As to quaternary structure, interacts with TTC3. Homodimer. Directly interacts with KIF14 depending on the activation state (stronger interaction with the kinase-dead form). In terms of tissue distribution, a major signal was observed in testis and brain, but it was also detected in thymus, spleen, kidney, heart and lung.

Its subcellular location is the cytoplasm. It catalyses the reaction L-seryl-[protein] + ATP = O-phospho-L-seryl-[protein] + ADP + H(+). The catalysed reaction is L-threonyl-[protein] + ATP = O-phospho-L-threonyl-[protein] + ADP + H(+). Its function is as follows. Plays a role in cytokinesis. Required for KIF14 localization to the central spindle and midbody. Probable RHO/RAC effector that binds to the GTP-bound forms of RHO and RAC1. It probably binds p21 with a tighter specificity in vivo. Displays serine/threonine protein kinase activity. Plays an important role in the regulation of cytokinesis and the development of the central nervous system. Phosphorylates MYL9/MLC2. The polypeptide is Citron Rho-interacting kinase (Cit) (Mus musculus (Mouse)).